The following is a 523-amino-acid chain: Cytoplasmic dynein 1 light intermediate chain 1 (523 aa).

The disordered stretch occupies residues 1–45; it reads MAAVGRVGSFGSSPPGLASTYASGPLANELASGSGGPAAGDDEDG. An ATP-binding site is contributed by 74 to 81; the sequence is GEDGAGKT. Phosphoserine is present on S207. The residue at position 213 (T213) is a Phosphothreonine. 2 disordered regions span residues 387 to 434 and 457 to 523; these read PPTA…DPNM and GSPG…GEAS. 2 positions are modified to phosphoserine: S398 and S405. A Phosphothreonine modification is found at T408. Phosphoserine occurs at positions 412, 419, 421, and 427. A compositionally biased stretch (low complexity) spans 412 to 421; the sequence is SVSSNVASVS. Gly residues predominate over residues 458–473; the sequence is SPGGPGVGGSPGGGAA. The segment covering 474 to 483 has biased composition (low complexity); the sequence is GASTSLPPSA. Phosphoserine occurs at positions 486 and 510. 2 positions are modified to phosphothreonine: T512 and T513. At S516 the chain carries Phosphoserine.

This sequence belongs to the dynein light intermediate chain family. As to quaternary structure, homodimer. The cytoplasmic dynein 1 complex consists of two catalytic heavy chains (HCs) and a number of non-catalytic subunits presented by intermediate chains (ICs), light intermediate chains (LICs) and light chains (LCs); the composition seems to vary in respect to the IC, LIC and LC composition. The heavy chain homodimer serves as a scaffold for the probable homodimeric assembly of the respective non-catalytic subunits. The ICs and LICs bind directly to the HC dimer and the LCs assemble on the IC dimer. Self-associates. Interacts with DYNC1H1; DYNC1LI1 and DYNC1LI2 bind mutually exclusive to DYNC1H1. Interacts with PCNT. Forms a complex with RAB11FIP3 and RAB11A1; the interaction between DYNC1LI1 and RAB11FIP3 is direct and induces DYNC1LI1 localization onto endosomal membrane; the complex regulates endocytic trafficking. Interacts with RUFY3. In terms of processing, phosphorylated during mitosis but not in interphase.

Its subcellular location is the cytoplasm. It localises to the chromosome. The protein localises to the centromere. It is found in the kinetochore. The protein resides in the cytoskeleton. Its subcellular location is the spindle pole. It localises to the recycling endosome membrane. Its function is as follows. Acts as one of several non-catalytic accessory components of the cytoplasmic dynein 1 complex that are thought to be involved in linking dynein to cargos and to adapter proteins that regulate dynein function. Cytoplasmic dynein 1 acts as a motor for the intracellular retrograde motility of vesicles and organelles along microtubules. May play a role in binding dynein to membranous organelles or chromosomes. Probably involved in the microtubule-dependent transport of pericentrin. Is required for progress through the spindle assembly checkpoint. The phosphorylated form appears to be involved in the selective removal of MAD1L1 and MAD1L2 but not BUB1B from kinetochores. Forms a functional Rab11/RAB11FIP3/dynein complex onto endosomal membrane that regulates the movement of peripheral sorting endosomes (SE) along microtubule tracks toward the microtubule organizing center/centrosome, generating the endosomal recycling compartment (ERC). In Rattus norvegicus (Rat), this protein is Cytoplasmic dynein 1 light intermediate chain 1 (Dync1li1).